Here is a 221-residue protein sequence, read N- to C-terminus: Ktr system potassium uptake protein C (221 aa).

The region spanning lysine 2–valine 118 is the RCK N-terminal domain. Residues arginine 12, aspartate 32–aspartate 34, aspartate 52–serine 53, isoleucine 74–glutamate 76, lysine 99–glutamine 101, histidine 105, and glutamate 121 each bind NAD(+). In terms of domain architecture, RCK C-terminal spans asparagine 135 to histidine 219.

This sequence belongs to the KtrA potassium transport family. In terms of assembly, homodimer, tetramer (dimer of homodimer) and octamer (tetramer of homodimer). Part of the KtrCD complex formed by an octameric catalytic ring of KtrC and a membrane associated dimer of KtrD forming a potassium channel.

Its subcellular location is the cell membrane. Catalytic subunit of the KtrCD potassium uptake transporter. The 2 major potassium transporter complexes KtrAB and KtrCD confer resistance to both suddenly imposed and prolonged osmotic stress. The protein is Ktr system potassium uptake protein C (ktrC) of Bacillus subtilis (strain 168).